The primary structure comprises 304 residues: Homoserine kinase (304 aa).

90 to 100 serves as a coordination point for ATP; it reads PLARGLGSSAS.

It belongs to the GHMP kinase family. Homoserine kinase subfamily.

It localises to the cytoplasm. The enzyme catalyses L-homoserine + ATP = O-phospho-L-homoserine + ADP + H(+). It functions in the pathway amino-acid biosynthesis; L-threonine biosynthesis; L-threonine from L-aspartate: step 4/5. In terms of biological role, catalyzes the ATP-dependent phosphorylation of L-homoserine to L-homoserine phosphate. The polypeptide is Homoserine kinase (Staphylococcus aureus (strain JH9)).